A 257-amino-acid chain; its full sequence is UPF0758 protein Bcenmc03_2526 (257 aa).

The tract at residues 1 to 53 (MLSPCPILPSAECRDTADTPADPPGRVIPINRRRRRPGDWRPERPRERLLERG) is disordered. Over residues 37–51 (PGDWRPERPRERLLE) the composition is skewed to basic and acidic residues. The 123-residue stretch at 135-257 (QIDSPGAVED…TFSFARAGWL (123 aa)) folds into the MPN domain. Histidine 206, histidine 208, and aspartate 219 together coordinate Zn(2+). A JAMM motif motif is present at residues 206–219 (HNHPSGAVQPSAED).

This sequence belongs to the UPF0758 family.

The protein is UPF0758 protein Bcenmc03_2526 of Burkholderia orbicola (strain MC0-3).